A 334-amino-acid chain; its full sequence is 4-hydroxyproline 2-epimerase (334 aa).

Residue cysteine 91 is the Proton acceptor of the active site. Substrate contacts are provided by residues 92 to 93, histidine 224, and aspartate 250; that span reads GH. The active-site Proton donor is the cysteine 254. 255 to 256 is a binding site for substrate; that stretch reads GT.

It belongs to the proline racemase family.

It catalyses the reaction trans-4-hydroxy-L-proline = cis-4-hydroxy-D-proline. Its function is as follows. Catalyzes the epimerization of trans-4-hydroxy-L-proline (t4LHyp) to cis-4-hydroxy-D-proline (c4DHyp). Is likely involved in a degradation pathway that converts t4LHyp to alpha-ketoglutarate. Displays no proline racemase activity. In Spirosoma linguale (strain ATCC 33905 / DSM 74 / LMG 10896 / Claus 1), this protein is 4-hydroxyproline 2-epimerase.